A 431-amino-acid polypeptide reads, in one-letter code: UPF0597 protein TDE_2144 (431 aa).

Belongs to the UPF0597 family.

In Treponema denticola (strain ATCC 35405 / DSM 14222 / CIP 103919 / JCM 8153 / KCTC 15104), this protein is UPF0597 protein TDE_2144.